The sequence spans 304 residues: MKTTRKCRALLSVGLNLLALLFSTTAFITTYWCEGTQRVPKPNCSKDRRHNCIDYGVNETDPSKVHYSWETGDDRFLFRHFHTGIWYSCEENIHGGGEKCRSFIDLAPASERGVLWLSVVSEVLYIMLLVVGFSLMCLELFHSSNVIDGLKLNAFAAVFTVLSGLLGMVAHMMYTQVFQITVSLGPEDWRPHTWDYGWSFCMAWGSFTCCMAASVTTLNSYTKTVIEFRHKRKLFEQGLREEQTFLDPETFHYFRDRSVQSISSSVDVYPSHGSSHGNSRGKMRSPPAPVDQGDNTESLGEEQC.

Topologically, residues 1–8 (MKTTRKCR) are cytoplasmic. A helical transmembrane segment spans residues 9–29 (ALLSVGLNLLALLFSTTAFIT). Over 30 to 112 (TYWCEGTQRV…FIDLAPASER (83 aa)) the chain is Extracellular. A helical transmembrane segment spans residues 113 to 133 (GVLWLSVVSEVLYIMLLVVGF). The Cytoplasmic segment spans residues 134-153 (SLMCLELFHSSNVIDGLKLN). The helical transmembrane segment at 154–174 (AFAAVFTVLSGLLGMVAHMMY) threads the bilayer. Residues 175-197 (TQVFQITVSLGPEDWRPHTWDYG) are Extracellular-facing. A helical transmembrane segment spans residues 198 to 218 (WSFCMAWGSFTCCMAASVTTL). Over 219–304 (NSYTKTVIEF…NTESLGEEQC (86 aa)) the chain is Cytoplasmic. A compositionally biased stretch (polar residues) spans 266–278 (VDVYPSHGSSHGN). A disordered region spans residues 266–304 (VDVYPSHGSSHGNSRGKMRSPPAPVDQGDNTESLGEEQC).

Belongs to the GSG1 family. As to quaternary structure, component of the AMPAR complex.

The protein localises to the cell membrane. Its subcellular location is the synapse. Its function is as follows. As a component of the AMPAR complex, modifies AMPA receptor (AMPAR) gating. The polypeptide is Germ cell-specific gene 1-like protein (gsg1l) (Danio rerio (Zebrafish)).